The chain runs to 58 residues: Large ribosomal subunit protein eL37 (58 aa).

Positions 20, 23, 35, and 38 each coordinate Zn(2+). The C4-type zinc-finger motif lies at C20–C38. Residues G39–N58 form a disordered region.

This sequence belongs to the eukaryotic ribosomal protein eL37 family. Zn(2+) serves as cofactor.

Binds to the 23S rRNA. In Halorubrum lacusprofundi (strain ATCC 49239 / DSM 5036 / JCM 8891 / ACAM 34), this protein is Large ribosomal subunit protein eL37.